Here is a 351-residue protein sequence, read N- to C-terminus: Phosphoribosylformylglycinamidine cyclo-ligase (351 aa).

This sequence belongs to the AIR synthase family.

Its subcellular location is the cytoplasm. The enzyme catalyses 2-formamido-N(1)-(5-O-phospho-beta-D-ribosyl)acetamidine + ATP = 5-amino-1-(5-phospho-beta-D-ribosyl)imidazole + ADP + phosphate + H(+). Its pathway is purine metabolism; IMP biosynthesis via de novo pathway; 5-amino-1-(5-phospho-D-ribosyl)imidazole from N(2)-formyl-N(1)-(5-phospho-D-ribosyl)glycinamide: step 2/2. This is Phosphoribosylformylglycinamidine cyclo-ligase from Burkholderia lata (strain ATCC 17760 / DSM 23089 / LMG 22485 / NCIMB 9086 / R18194 / 383).